Consider the following 101-residue polypeptide: MCTPTTCLLADRDKSGEDRHAETNVLQGMDMLLELLLPVYARLNESGWLLWFVFHDVYEAVKMSTKESVHTRVINFPDILSTQQMRQGPSQIRTPLVMLLM.

This is an uncharacterized protein from Saccharomyces cerevisiae (strain ATCC 204508 / S288c) (Baker's yeast).